The following is a 230-amino-acid chain: Voltage-gated hydrogen channel 1 (230 aa).

Over Met-1 to Lys-58 the chain is Cytoplasmic. A helical membrane pass occupies residues Phe-59–Leu-79. Residues Leu-80–Ile-96 are Extracellular-facing. A helical transmembrane segment spans residues Phe-97–Phe-119. Residues Arg-120 to Lys-127 are Cytoplasmic-facing. A helical membrane pass occupies residues Phe-128–Ser-148. Topologically, residues Arg-149–Ala-155 are extracellular. The chain crosses the membrane as a helical span at residues Val-156–Val-176. The stretch at Ser-177–Val-226 forms a coiled coil. Topologically, residues Ser-177 to Ser-230 are cytoplasmic.

It belongs to the hydrogen channel family. As to quaternary structure, homodimer.

The protein resides in the membrane. Its subcellular location is the cell membrane. Mediates the voltage-dependent proton permeability of excitable membranes. Forms a proton-selective channel through which protons may pass in accordance with their electrochemical gradient. In Xenopus tropicalis (Western clawed frog), this protein is Voltage-gated hydrogen channel 1 (hvcn1).